Consider the following 1307-residue polypeptide: Cellulose synthase 2 operon protein C (1307 aa).

A signal peptide spans 1–55 (MTRPRGPAPRDGAAWRRDPARRVLLRDAVRGREGGLRLACAVMAGLIVSGGVACA). TPR repeat units lie at residues 97–130 (LELLLDQGYYWLGQHNLGKAHETIQRALSIEPDN), 270–303 (LDGLRALARSNVSAQIRSDAVAAWRDALLWEPIT), 339–372 (AANDRQQGYALLSRHMLDAAAREFHRAVDIDPHD), 374–406 (DALGGLGLVAQARQQPALARQYFLQAMQAGPDA), 458–491 (LTVLSLQAALARRQGDTADAVRLYREVVRRAPRD), 493–525 (GALFSLGALDVQVGDATEAADILTRLQRLAPAM), 528–561 (RLEAMMLSAQADRAGDDDGRIALLRRAQALDPDD), 754–787 (IGLAIMTADGFDRYGRTAQAAQVLAPVLRAHPDS), and 788–821 (VEAHLAMGRVYQTRNMATRALEEDETALRLKPAN).

This sequence belongs to the AcsC/BcsC family.

It localises to the cell outer membrane. The protein operates within glycan metabolism; bacterial cellulose biosynthesis. Functionally, required for maximal bacterial cellulose synthesis. The polypeptide is Cellulose synthase 2 operon protein C (bcsCII) (Komagataeibacter xylinus (Gluconacetobacter xylinus)).